Here is a 756-residue protein sequence, read N- to C-terminus: Serine/threonine-protein kinase DCLK1 (756 aa).

S32 and S36 each carry phosphoserine. T46 is subject to Phosphothreonine. Doublecortin domains are found at residues 57–143 and 186–269; these read KKVR…LEYT and KLVT…QDDF. The tract at residues 288–393 is disordered; the sequence is ASASRRGTTK…QRGWRREESE (106 aa). Residues 297-313 show a composition bias toward low complexity; it reads KSPGPSRRSKSPASTSS. S305, S307, S330, S332, S334, S337, S347, S352, S353, S355, S358, C362, and S364 each carry phosphoserine. Residues 347–364 are compositionally biased toward low complexity; it reads SQHGGSSTSLSSTKVCSS. Residues 366-375 are compositionally biased toward acidic residues; that stretch reads DENDGPGEGD. S392 carries the phosphoserine modification. A Protein kinase domain is found at 406–663; that stretch reads YKVGRTIGDG…AVQVLEHPWV (258 aa). Residues 412–420 and K435 contribute to the ATP site; that span reads IGDGNFAVV. D527 functions as the Proton acceptor in the catalytic mechanism. Position 536 is a phosphotyrosine (Y536). Over residues 711 to 723 the composition is skewed to basic and acidic residues; sequence QVFRRRRNQDVRS. Positions 711 to 756 are disordered; it reads QVFRRRRNQDVRSRYKAQPAPPELNSESEDYSPSSSETVRSPNSPF. S742, S751, and S754 each carry phosphoserine.

This sequence belongs to the protein kinase superfamily. CAMK Ser/Thr protein kinase family. CaMK subfamily.

The catalysed reaction is L-seryl-[protein] + ATP = O-phospho-L-seryl-[protein] + ADP + H(+). The enzyme catalyses L-threonyl-[protein] + ATP = O-phospho-L-threonyl-[protein] + ADP + H(+). In terms of biological role, probable kinase that may be involved in a calcium-signaling pathway controlling neuronal migration in the developing brain. May also participate in functions of the mature nervous system. The chain is Serine/threonine-protein kinase DCLK1 (Dclk1) from Mus musculus (Mouse).